The primary structure comprises 68 residues: Beta-defensin 1 (68 aa).

A signal peptide spans 1 to 21 (MRTSYLLLFTLCLLLSEIASG). Residues 22–32 (GNFLTGLGHRS) constitute a propeptide that is removed on maturation. 3 disulfides stabilise this stretch: C37–C66, C44–C59, and C49–C67.

This sequence belongs to the beta-defensin family. As to quaternary structure, monomer. Homodimer.

It is found in the secreted. The protein resides in the membrane. Has bactericidal activity. May act as a ligand for C-C chemokine receptor CCR6. Positively regulates the sperm motility and bactericidal activity in a CCR6-dependent manner. Binds to CCR6 and triggers Ca2+ mobilization in the sperm which is important for its motility. The sequence is that of Beta-defensin 1 (DEFB1) from Gorilla gorilla gorilla (Western lowland gorilla).